Consider the following 169-residue polypeptide: uncharacterized protein (169 aa).

A helical transmembrane segment spans residues 55–77 (SLFIFKAVMILHTCLIVKSIRIF).

It localises to the membrane. This is an uncharacterized protein from Saccharomyces cerevisiae (strain ATCC 204508 / S288c) (Baker's yeast).